Here is a 288-residue protein sequence, read N- to C-terminus: Acidic endochitinase SP2 (288 aa).

A signal peptide spans 1–27 (MTLLLKNTLYLALIISVISSFPTSLFA). Pyrrolidone carboxylic acid is present on glutamine 28. The Chitin-binding type-1 domain maps to 28–63 (QNCGCAPNLCCSNFGFCGTGTPYCGVGNCQSGPCEG). 4 disulfide bridges follow: cysteine 30-cysteine 38, cysteine 32-cysteine 44, cysteine 37-cysteine 51, and cysteine 56-cysteine 61. Residues 64–78 (GTPTTPTTPTTPTTP) are compositionally biased toward low complexity. Positions 64–84 (GTPTTPTTPTTPTTPGTGGGG) are disordered. Residues 64 to 85 (GTPTTPTTPTTPTTPGTGGGGS) form a hinge region (Gly/Pro/Thr-rich) region. 4-hydroxyproline is present on residues proline 66, proline 69, proline 72, and proline 75. A run of 4 repeats spans residues 67 to 69 (TTP), 70 to 72 (TTP), 73 to 75 (TTP), and 76 to 78 (TTP). Positions 67-78 (TTPTTPTTPTTP) are 4 X 3 AA tandem repeats of T-T-P. The segment at 86–288 (SVSDIVSQAF…GVAPGDNLTC (203 aa)) is catalytic. Disulfide bonds link cysteine 107/cysteine 154, cysteine 168/cysteine 178, and cysteine 256/cysteine 288. The active-site Proton donor is glutamate 149.

It belongs to the glycosyl hydrolase 19 family. Chitinase class I subfamily. O-glycosylated on hydroxyprolines; contains xylose. In terms of tissue distribution, localized to infected area.

It localises to the secreted. The protein resides in the extracellular space. It catalyses the reaction Random endo-hydrolysis of N-acetyl-beta-D-glucosaminide (1-&gt;4)-beta-linkages in chitin and chitodextrins.. Defense against chitin-containing fungal pathogens. The protein is Acidic endochitinase SP2 (SP2) of Beta vulgaris (Sugar beet).